The primary structure comprises 775 residues: Subtilisin-like protease SBT1.2 (775 aa).

A signal peptide spans 1–20 (MEPKPFFLCIIFLLFCSSSS). The region spanning 27–111 (TYIVQLHPNS…AVRPDHVLQV (85 aa)) is the Inhibitor I9 domain. In terms of domain architecture, Peptidase S8 spans 116–618 (SYKFLGLDGF…AGHVNPQKAI (503 aa)). Residues Asp-146 and His-222 each act as charge relay system in the active site. Residues 388 to 470 (GGDKGSEFCL…YTESVLLKAY (83 aa)) enclose the PA domain. Residues Asn-472 and Asn-544 are each glycosylated (N-linked (GlcNAc...) asparagine). Ser-552 serves as the catalytic Charge relay system. Residue Asn-652 is glycosylated (N-linked (GlcNAc...) asparagine).

The protein belongs to the peptidase S8 family. As to expression, mostly expressed in leaves and cotyledons (especially in epidermal cells), and, to a lower extent, in floral buds, stems, and siliques. Strongly expressed in stomatal precursor cells (meristemoids and guard mother cells).

The protein localises to the secreted. The protein resides in the extracellular space. It localises to the apoplast. It is found in the cell membrane. In terms of biological role, serine protease involved in the negative regulation of stomatal density and distribution. Not active on EPFL6 (AC Q1PEY6). Positive regulator of water use efficiency (WUE). This Arabidopsis thaliana (Mouse-ear cress) protein is Subtilisin-like protease SBT1.2.